Consider the following 354-residue polypeptide: MASAREPTEDEIAKFLATRTSSQILQLMRCIREPAAQFAFTAKLLTFNSVKSAKPTVPPKAKKALNAFVGFRCYYIAIPAFKQWPMKKLSNLISLLWDRDPNKSLWSLMAKAWSNIRDQVGKDQAPLDEFFDIICSHLKLPDPASYLDLHGWILIVNDQGDPTLVESIDSKSASVGSSHIDLALSVEDIIAFVRNAGYAPTYIPNDNITSPTFLGQLANSPALEEDQAVAEEYDTPMADTSSASEFQQSLQREMAITEAAASVVGPDPLPDFDFTPFYESVNNLIVEHMAMEQANAGYTQGTQLSNHLVVDSGKAYLGMNDFVVDLPELIDYDAFHFGGNEDVTLPMFDDITYY.

Residues 60–117 (KAKKALNAFVGFRCYYIAIPAFKQWPMKKLSNLISLLWDRDPNKSLWSLMAKAWSNIR) constitute a DNA-binding region (alpha box).

It belongs to the MATALPHA1 family.

The protein resides in the nucleus. In terms of biological role, mating type proteins are sequence specific DNA-binding proteins that act as master switches in fungal differentiation by controlling gene expression in a cell type-specific fashion. Transcriptional activator that induces the transcription of alpha-specific genes. The polypeptide is Mating-type protein MAT-1 (MAT1) (Cochliobolus cymbopogonis (Curvularia cymbopogonis)).